The following is a 462-amino-acid chain: Sodium-coupled neutral amino acid transporter 7 (462 aa).

At Ser-28 the chain carries Phosphoserine. A run of 11 helical transmembrane segments spans residues 56-76 (AIFIVVNACLGAGLLNFPAAF), 82-102 (VAAGIALQMGMLVFIISGLVI), 130-150 (LCEVAIAVYTFGTCIAFLIII), 178-198 (FTISLTAFLFILPLSIPREIG), 205-225 (FLSVVGTWYVTAIVIIKYIWP), 239-259 (ASWMAVFNAMPTICFGFQCHV), 282-302 (AAMVIALAVYMGTGICGFLTF), 319-339 (MAVAVARAFIILSVLTSYPIL), 371-391 (VLQTLVWFLLTLLLALFIPDI), 395-415 (ISVIGGLAACFIFVFPGLCLI), and 428-448 (ASWWVLVSYGVLLVTLGAFIF).

Belongs to the amino acid/polyamine transporter 2 family. As to quaternary structure, interacts with the mTORC1 complex; this interaction mediates the recruitment of mTORC1 to the lysosome and its subsequent activation.

The protein localises to the lysosome membrane. Its subcellular location is the cell projection. It localises to the axon. It catalyses the reaction L-asparagine(in) + Na(+)(in) = L-asparagine(out) + Na(+)(out). The catalysed reaction is L-glutamine(in) + Na(+)(in) = L-glutamine(out) + Na(+)(out). Functionally, symporter that selectively cotransports sodium ions and amino acids, such as L-glutamine and L-asparagine from the lysosome into the cytoplasm and may participates in mTORC1 activation. The transport activity requires an acidic lysosomal lumen. The chain is Sodium-coupled neutral amino acid transporter 7 from Homo sapiens (Human).